The following is a 617-amino-acid chain: Lipoteichoic acid synthase-like YvgJ (617 aa).

The Cytoplasmic portion of the chain corresponds to 1 to 10 (MKGTFFHNQR). Residues 11–31 (FLCFSILFMWIKTYVIYKLGF) form a helical membrane-spanning segment. Residues 32–41 (DLQIDTLLEE) lie on the Extracellular side of the membrane. The chain crosses the membrane as a helical span at residues 42-62 (LMLLVNPLSFILPLFGIGLFL). Topologically, residues 63–68 (KENKQR) are cytoplasmic. The helical transmembrane segment at 69 to 89 (AFLLIANLVLTVILISNTIFY) threads the bilayer. The Extracellular portion of the chain corresponds to 90–115 (GFYIDFITIPVLFQASNMSDMGSSVK). The chain crosses the membrane as a helical span at residues 116 to 136 (ELFHPLFIALFVDLVFLLLFA). At 137-153 (RKTKHPQTKAAPHTIKR) the chain is on the cytoplasmic side. The chain crosses the membrane as a helical span at residues 154-171 (YYAASCGMLLCTLALAEV). Topologically, residues 172–617 (QQPKLLAHSF…LNGDLLRFSE (446 aa)) are extracellular. Mn(2+) is bound by residues Glu-251 and Thr-293. Thr-293 is an active-site residue. His-408 lines the substrate pocket. Mn(2+)-binding residues include Asp-467 and His-468.

This sequence belongs to the LTA synthase family. Post-translationally, proteolytically cleaved.

The protein resides in the cell membrane. It is found in the secreted. The protein is Lipoteichoic acid synthase-like YvgJ (yvgJ) of Bacillus subtilis (strain 168).